The following is a 457-amino-acid chain: Cell division protein FtsZ (457 aa).

GTP contacts are provided by residues 26–30, 115–117, Glu-146, Lys-150, and Asp-193; these read GGGGN and GTG. Residues 429 to 447 show a composition bias toward basic and acidic residues; it reads KKDVVRSEESERPAFESER. Residues 429-457 are disordered; the sequence is KKDVVRSEESERPAFESERSSSPTTISFN. The segment covering 448 to 457 has biased composition (polar residues); it reads SSSPTTISFN.

It belongs to the FtsZ family. Homodimer. Polymerizes to form a dynamic ring structure in a strictly GTP-dependent manner. Interacts directly with several other division proteins.

The protein localises to the cytoplasm. Its function is as follows. Essential cell division protein that forms a contractile ring structure (Z ring) at the future cell division site. The regulation of the ring assembly controls the timing and the location of cell division. One of the functions of the FtsZ ring is to recruit other cell division proteins to the septum to produce a new cell wall between the dividing cells. Binds GTP and shows GTPase activity. The polypeptide is Cell division protein FtsZ (Porphyromonas gingivalis (strain ATCC BAA-308 / W83)).